A 333-amino-acid chain; its full sequence is Mitochondrial fission regulator 1 (333 aa).

The N-terminal 48 residues, 1 to 48, are a transit peptide targeting the mitochondrion; that stretch reads MLGWIKRLIRMVFQQVGVSMQSVLWSRKPYGSSRSIVRKIGTNLSLIQ. Position 119 is a phosphoserine (Ser119). Residues 137 to 169 adopt a coiled-coil conformation; the sequence is NEEALQKICALENELAALRAQIAKIVTQQEQQN. Disordered regions lie at residues 177–198 and 288–315; these read STTF…PPPA and SDSQ…FGPH. The interval 179–304 is necessary and sufficient to promote mitochondrial fission; it reads TFGTIPPHPP…EKGIPKSESE (126 aa). The segment covering 184–198 has biased composition (pro residues); that stretch reads PPHPPPPPPPLPPPA. Basic and acidic residues predominate over residues 288–307; that stretch reads SDSQDEVEKGIPKSESEATS.

The protein belongs to the MTFR1 family.

It is found in the mitochondrion. May play a role in mitochondrial aerobic respiration. May also regulate mitochondrial organization and fission. The chain is Mitochondrial fission regulator 1 (MTFR1) from Homo sapiens (Human).